Consider the following 549-residue polypeptide: MNWRRIVWLLALVTLPTLAEETPLQLVLRGAQHDQLYQLSSSGVTKVSALPDSLTTPLGSLWKLYVYAWLEDTHQPEQPYQCRGNSPEEVYCCQAGESITRDTALVRSCGLYFAPQRLHIGADVWGQYWQQRQAPAWLASLTTLKPETSVTVKSLLDSLATLPAQNKAQEVLLDVVLDEAKIGVASMLGSRVRVKTWSWFADDKQEIRQGGFAGWLTDGTPLWVTGSGTSKTVLTRYATVLNRVLPVPTQVASGQCVEVELFARYPLKKITAEKSTTAVNPGVLNGRYRVTFTNGNHITFVSHGETTLLSEKGKLKLQSHLDREEYVARVLDREAKSTPPEAAKAMTVAIRTFLQQNANREGDCLTIPDSSATQRVSASPATTGARTMTAWTQDLIYAGDPVHYHGSRATEGTLSWRQATAQAGQGERYDQILAFAYPDNSLSRWGAPRSTCQLLPKAKAWLAKKMPQWRRILQAETGYNEPDVFAVCRLVSGFPYTDRQQKRLFIRNFFTLQDRLDLTHEYLHLAFDGYPTGLDENYIETLTRQLLMD.

An N-terminal signal peptide occupies residues 1–19 (MNWRRIVWLLALVTLPTLA).

This is an uncharacterized protein from Escherichia coli (strain K12).